The chain runs to 94 residues: Large ribosomal subunit protein bL28 (94 aa).

The protein belongs to the bacterial ribosomal protein bL28 family.

This is Large ribosomal subunit protein bL28 from Hyphomonas neptunium (strain ATCC 15444).